The chain runs to 613 residues: RUN domain-containing protein 1 (613 aa).

The segment at Ala15–Glu36 is disordered. Thr54 bears the Phosphothreonine mark. The segment covering Leu57–Pro69 has biased composition (low complexity). 3 disordered regions span residues Leu57–Thr79, Tyr140–Thr177, and Gly305–Asp330. Phosphoserine occurs at positions 71 and 75. The span at Pro159–Thr177 shows a compositional bias: basic and acidic residues. Residues Trp160–Glu235 are a coiled coil. Positions Asn309–Lys325 are enriched in polar residues. Residues Glu421 to Ala602 form the RUN domain. Ser497 is subject to Phosphoserine.

Its function is as follows. May play a role as p53/TP53 inhibitor and thus may have oncogenic activity. The protein is RUN domain-containing protein 1 (RUNDC1) of Homo sapiens (Human).